The sequence spans 66 residues: uncharacterized protein (66 aa).

2 consecutive transmembrane segments (helical) span residues 4-24 (ALFI…LLIF) and 38-58 (LLTP…ILVL).

It is found in the membrane. This is an uncharacterized protein from Saccharomyces cerevisiae (strain ATCC 204508 / S288c) (Baker's yeast).